A 145-amino-acid chain; its full sequence is 3-hydroxyacyl-[acyl-carrier-protein] dehydratase FabZ (145 aa).

His-51 is a catalytic residue.

Belongs to the thioester dehydratase family. FabZ subfamily.

It localises to the cytoplasm. It catalyses the reaction a (3R)-hydroxyacyl-[ACP] = a (2E)-enoyl-[ACP] + H2O. In terms of biological role, involved in unsaturated fatty acids biosynthesis. Catalyzes the dehydration of short chain beta-hydroxyacyl-ACPs and long chain saturated and unsaturated beta-hydroxyacyl-ACPs. This is 3-hydroxyacyl-[acyl-carrier-protein] dehydratase FabZ from Macrococcus caseolyticus (strain JCSC5402) (Macrococcoides caseolyticum).